A 293-amino-acid polypeptide reads, in one-letter code: Nucleotide-binding protein Dole_0503 (293 aa).

An ATP-binding site is contributed by 11–18 (GLSGSGKS). Position 62 to 65 (62 to 65 (DLRE)) interacts with GTP.

Belongs to the RapZ-like family.

In terms of biological role, displays ATPase and GTPase activities. The polypeptide is Nucleotide-binding protein Dole_0503 (Desulfosudis oleivorans (strain DSM 6200 / JCM 39069 / Hxd3) (Desulfococcus oleovorans)).